The following is a 181-amino-acid chain: CDP-diacylglycerol--glycerol-3-phosphate 3-phosphatidyltransferase (181 aa).

The next 4 helical transmembrane spans lie at 8–28 (PNYLTIARIMVIPVIILAFYI), 35–55 (KLGALLFVLASITDFFDGYIA), 64–84 (FGKMFDPIADKLLIGCVIIML), and 148–168 (IIYLDIVGEIILWIAAFLTII).

It belongs to the CDP-alcohol phosphatidyltransferase class-I family.

It is found in the cell membrane. The enzyme catalyses a CDP-1,2-diacyl-sn-glycerol + sn-glycerol 3-phosphate = a 1,2-diacyl-sn-glycero-3-phospho-(1'-sn-glycero-3'-phosphate) + CMP + H(+). It participates in phospholipid metabolism; phosphatidylglycerol biosynthesis; phosphatidylglycerol from CDP-diacylglycerol: step 1/2. Its function is as follows. This protein catalyzes the committed step to the synthesis of the acidic phospholipids. In Rickettsia felis (strain ATCC VR-1525 / URRWXCal2) (Rickettsia azadi), this protein is CDP-diacylglycerol--glycerol-3-phosphate 3-phosphatidyltransferase (pgsA).